The primary structure comprises 215 residues: Deoxyadenosine kinase (215 aa).

9-17 provides a ligand contact to ATP; the sequence is GPIGAGKSS. Positions 33, 45, and 56 each coordinate substrate. Asp79 serves as the catalytic Proton acceptor. Residues Arg80, Asp85, and Glu150 each contribute to the substrate site.

The protein belongs to the DCK/DGK family. In terms of assembly, heterodimer of a deoxyadenosine (DAK) and a deoxyguanosine kinase (DGK).

The enzyme catalyses 2'-deoxyadenosine + ATP = dAMP + ADP + H(+). Its function is as follows. DGK/DAK plays an essential role in generating the deoxyribonucleotide precursors, dGTP and dATP, for DNA metabolism. The protein is Deoxyadenosine kinase of Lactobacillus acidophilus (strain ATCC 700396 / NCK56 / N2 / NCFM).